The primary structure comprises 97 residues: Large ribosomal subunit protein bL28 (97 aa).

The protein belongs to the bacterial ribosomal protein bL28 family.

This Rickettsia akari (strain Hartford) protein is Large ribosomal subunit protein bL28.